The primary structure comprises 118 residues: MVARTGSTNIMVRKLIDLLSKQKKPLWKRVAEELQKPSRQRPYINIYKINKYTKPNDVVVVPGKVLGIGNLDHPVTVVALSFSKSAKEKIEKSGGKVISLYKALEEVKDFKNVRLMKG.

It belongs to the eukaryotic ribosomal protein eL18 family.

The protein is Large ribosomal subunit protein eL18 of Sulfurisphaera tokodaii (strain DSM 16993 / JCM 10545 / NBRC 100140 / 7) (Sulfolobus tokodaii).